Reading from the N-terminus, the 194-residue chain is ATP-dependent Clp protease proteolytic subunit 1 (194 aa).

S99 acts as the Nucleophile in catalysis. The active site involves H124.

The protein belongs to the peptidase S14 family. In terms of assembly, fourteen ClpP subunits assemble into 2 heptameric rings which stack back to back to give a disk-like structure with a central cavity, resembling the structure of eukaryotic proteasomes.

Its subcellular location is the cytoplasm. It carries out the reaction Hydrolysis of proteins to small peptides in the presence of ATP and magnesium. alpha-casein is the usual test substrate. In the absence of ATP, only oligopeptides shorter than five residues are hydrolyzed (such as succinyl-Leu-Tyr-|-NHMec, and Leu-Tyr-Leu-|-Tyr-Trp, in which cleavage of the -Tyr-|-Leu- and -Tyr-|-Trp bonds also occurs).. Functionally, cleaves peptides in various proteins in a process that requires ATP hydrolysis. Has a chymotrypsin-like activity. Plays a major role in the degradation of misfolded proteins. The chain is ATP-dependent Clp protease proteolytic subunit 1 from Borreliella burgdorferi (strain ATCC 35210 / DSM 4680 / CIP 102532 / B31) (Borrelia burgdorferi).